Here is a 372-residue protein sequence, read N- to C-terminus: Putative 26S proteasome regulatory subunit homolog MTBMA_c13930 (372 aa).

164-171 (GSPGTGKT) provides a ligand contact to ATP.

It belongs to the AAA ATPase family.

Its function is as follows. The 26S proteasome is involved in the ATP-dependent degradation of ubiquitinated proteins. The regulatory (or ATPase) complex confers ATP dependency and substrate specificity to the 26S complex. The polypeptide is Putative 26S proteasome regulatory subunit homolog MTBMA_c13930 (Methanothermobacter marburgensis (strain ATCC BAA-927 / DSM 2133 / JCM 14651 / NBRC 100331 / OCM 82 / Marburg) (Methanobacterium thermoautotrophicum)).